We begin with the raw amino-acid sequence, 396 residues long: Elongation factor Tu (396 aa).

One can recognise a tr-type G domain in the interval 10 to 205 (KPHVNIGTIG…ACDDNIPDPV (196 aa)). Positions 19–26 (GHVDHGKT) are G1. Position 19-26 (19-26 (GHVDHGKT)) interacts with GTP. T26 contacts Mg(2+). The interval 62–66 (GITIN) is G2. Residues 83 to 86 (DAPG) form a G3 region. GTP is bound by residues 83-87 (DAPGH) and 138-141 (NKCD). The segment at 138 to 141 (NKCD) is G4. The tract at residues 175–177 (SAL) is G5.

Belongs to the TRAFAC class translation factor GTPase superfamily. Classic translation factor GTPase family. EF-Tu/EF-1A subfamily. As to quaternary structure, monomer.

It localises to the cytoplasm. It carries out the reaction GTP + H2O = GDP + phosphate + H(+). In terms of biological role, GTP hydrolase that promotes the GTP-dependent binding of aminoacyl-tRNA to the A-site of ribosomes during protein biosynthesis. This chain is Elongation factor Tu, found in Corynebacterium efficiens (strain DSM 44549 / YS-314 / AJ 12310 / JCM 11189 / NBRC 100395).